A 78-amino-acid polypeptide reads, in one-letter code: Large ribosomal subunit protein bL28B (78 aa).

The tract at residues 1–29 (MSAHCQVTGRKPGFGNTVSHSHRRSRRRW) is disordered. A compositionally biased stretch (basic residues) spans 20-29 (HSHRRSRRRW).

Belongs to the bacterial ribosomal protein bL28 family.

This Mycobacterium bovis (strain ATCC BAA-935 / AF2122/97) protein is Large ribosomal subunit protein bL28B (rpmB2).